Reading from the N-terminus, the 514-residue chain is Probable cysteine protease ATG4 (514 aa).

The span at Met1–Ala15 shows a compositional bias: basic and acidic residues. Disordered regions lie at residues Met1–Val28 and Asp61–Gln84. The Nucleophile role is filled by Cys166. Active-site residues include Asp336 and His338. A disordered region spans residues Ala461–Glu514. The span at Ser472–Pro489 shows a compositional bias: low complexity.

It belongs to the peptidase C54 family.

The protein resides in the cytoplasm. It is found in the nucleus. The protein localises to the preautophagosomal structure. It catalyses the reaction [protein]-C-terminal L-amino acid-glycyl-phosphatidylethanolamide + H2O = [protein]-C-terminal L-amino acid-glycine + a 1,2-diacyl-sn-glycero-3-phosphoethanolamine. Its function is as follows. Cysteine protease that plays a key role in cytoplasm to vacuole transport (Cvt) and autophagy by mediating both proteolytic activation and delipidation of ATG8. Required for selective autophagic degradation of the nucleus (nucleophagy) as well as for mitophagy which contributes to regulate mitochondrial quantity and quality by eliminating the mitochondria to a basal level to fulfill cellular energy requirements and preventing excess ROS production. The protease activity is required for proteolytic activation of ATG8: cleaves the C-terminal amino acid of ATG8 to reveal a C-terminal glycine. ATG8 ubiquitin-like activity requires the exposure of the glycine at the C-terminus for its conjugation to phosphatidylethanolamine (PE) and its insertion to membranes, which is necessary for autophagy. The ATG8-PE conjugate mediates tethering between adjacent membranes and stimulates membrane hemifusion, leading to expansion of the autophagosomal membrane during autophagy. In addition to the protease activity, also catalyzes deconjugation of PE-conjugated forms of ATG8 during macroautophagy: ATG8 delipidation is required to release the protein from membranes, which facilitates multiple events during macroautophagy, and especially for efficient autophagosome biogenesis, the assembly of ATG9-containing tubulovesicular clusters into phagophores/autophagosomes, and for the disassembly of PAS-associated ATG components. ATG8 delipidation by ATG4 also recycles ATG8-PE generated on inappropriate membranes to maintain a reservoir of unlipidated ATG8 that is required for autophagosome formation at the PAS. The protein is Probable cysteine protease ATG4 (ATG4) of Scheffersomyces stipitis (strain ATCC 58785 / CBS 6054 / NBRC 10063 / NRRL Y-11545) (Yeast).